A 156-amino-acid polypeptide reads, in one-letter code: Endoribonuclease YbeY (156 aa).

Zn(2+) contacts are provided by His-115, His-119, and His-125.

This sequence belongs to the endoribonuclease YbeY family. It depends on Zn(2+) as a cofactor.

It is found in the cytoplasm. Functionally, single strand-specific metallo-endoribonuclease involved in late-stage 70S ribosome quality control and in maturation of the 3' terminus of the 16S rRNA. The polypeptide is Endoribonuclease YbeY (Actinobacillus succinogenes (strain ATCC 55618 / DSM 22257 / CCUG 43843 / 130Z)).